The sequence spans 108 residues: Integration host factor subunit alpha (108 aa).

Belongs to the bacterial histone-like protein family. As to quaternary structure, heterodimer of an alpha and a beta chain.

This protein is one of the two subunits of integration host factor, a specific DNA-binding protein that functions in genetic recombination as well as in transcriptional and translational control. The chain is Integration host factor subunit alpha from Rhodopseudomonas palustris (strain BisB18).